The chain runs to 72 residues: Exodeoxyribonuclease 7 small subunit (72 aa).

This sequence belongs to the XseB family. As to quaternary structure, heterooligomer composed of large and small subunits.

The protein localises to the cytoplasm. The catalysed reaction is Exonucleolytic cleavage in either 5'- to 3'- or 3'- to 5'-direction to yield nucleoside 5'-phosphates.. In terms of biological role, bidirectionally degrades single-stranded DNA into large acid-insoluble oligonucleotides, which are then degraded further into small acid-soluble oligonucleotides. This Chlamydia trachomatis serovar A (strain ATCC VR-571B / DSM 19440 / HAR-13) protein is Exodeoxyribonuclease 7 small subunit.